A 720-amino-acid polypeptide reads, in one-letter code: Polyribonucleotide nucleotidyltransferase (720 aa).

Residues Asp484 and Asp490 each coordinate Mg(2+). The KH domain maps to 551 to 610; it reads PRMYKINIDPSKIGSVIGSGGKTIRSIIEQTNTTVDIENDGTVVIGATDEASAKKAIKII. One can recognise an S1 motif domain in the interval 620 to 688; that stretch reads GSIYTGKVTR…NQGRVNLSHR (69 aa). Positions 697 to 720 are disordered; it reads PISRNRDSQPRRPGPFRPSDRSNS.

This sequence belongs to the polyribonucleotide nucleotidyltransferase family. Mg(2+) is required as a cofactor.

The protein resides in the cytoplasm. The enzyme catalyses RNA(n+1) + phosphate = RNA(n) + a ribonucleoside 5'-diphosphate. Involved in mRNA degradation. Catalyzes the phosphorolysis of single-stranded polyribonucleotides processively in the 3'- to 5'-direction. This is Polyribonucleotide nucleotidyltransferase from Dehalococcoides mccartyi (strain CBDB1).